The following is a 268-amino-acid chain: Shikimate dehydrogenase (NADP(+)) (268 aa).

Shikimate is bound by residues serine 14–serine 16 and threonine 61. The active-site Proton acceptor is lysine 65. Positions 86 and 102 each coordinate shikimate. NADP(+) contacts are provided by residues glycine 126–alanine 130, asparagine 149–lysine 154, and methionine 213. Tyrosine 215 lines the shikimate pocket. An NADP(+)-binding site is contributed by glycine 238.

The protein belongs to the shikimate dehydrogenase family. As to quaternary structure, homodimer.

The catalysed reaction is shikimate + NADP(+) = 3-dehydroshikimate + NADPH + H(+). The protein operates within metabolic intermediate biosynthesis; chorismate biosynthesis; chorismate from D-erythrose 4-phosphate and phosphoenolpyruvate: step 4/7. In terms of biological role, involved in the biosynthesis of the chorismate, which leads to the biosynthesis of aromatic amino acids. Catalyzes the reversible NADPH linked reduction of 3-dehydroshikimate (DHSA) to yield shikimate (SA). In Haemophilus influenzae (strain PittEE), this protein is Shikimate dehydrogenase (NADP(+)).